The following is a 359-amino-acid chain: MIVIDGSIGEGGGQILRTTLALAALLGKPVRIVNIRAKRPRPGLQRQHLTSVKAVAELASARVEGLELGSTTLVFIPRGLRSGRFYFNIGTAGSITLVLQALLPVTAFAPGPVEVEIVGGTDVPWSPPIDYVRFVLRKLLAMFGFEFEIIVKRRGHYPRGGGRVVLRVTQPPHVLKPVKLEERGKVLRVEGLSHAVRLPRHVAERQARSAEAVLRSKLPGVPISIDLEWYEPSRDPHLGPGSGVVVWAVAEHSVLGSDSLGAKGKPAEAVGREAAEKLLEDLATGTALDRHASDMLIPYAALACGESILGGARLTMHAWTNIEVVKMLVPGAEMEFIEGGKLNEKFKLRVKGICYKPSS.

ATP is bound by residues Gln100 and 291–294 (HASD). The active-site Tele-AMP-histidine intermediate is His317.

The protein belongs to the RNA 3'-terminal cyclase family. Type 1 subfamily.

Its subcellular location is the cytoplasm. It carries out the reaction a 3'-end 3'-phospho-ribonucleotide-RNA + ATP = a 3'-end 2',3'-cyclophospho-ribonucleotide-RNA + AMP + diphosphate. Its function is as follows. Catalyzes the conversion of 3'-phosphate to a 2',3'-cyclic phosphodiester at the end of RNA. The mechanism of action of the enzyme occurs in 3 steps: (A) adenylation of the enzyme by ATP; (B) transfer of adenylate to an RNA-N3'P to produce RNA-N3'PP5'A; (C) and attack of the adjacent 2'-hydroxyl on the 3'-phosphorus in the diester linkage to produce the cyclic end product. The biological role of this enzyme is unknown but it is likely to function in some aspects of cellular RNA processing. The sequence is that of RNA 3'-terminal phosphate cyclase from Hyperthermus butylicus (strain DSM 5456 / JCM 9403 / PLM1-5).